The primary structure comprises 321 residues: MTFISQAPSVSISSAGPSDYFALLKPRVMSLVIFTALAGMLIAPDPVHPIVGFASLLAIAVGAGASGALNMWYDADIDAVMKRTAKRPIPLGRVMPNEALAFGLTLSFLSVFTLGIVANWLAAGFLAFTIFFYVVIYTMWLKRSTPQNIVIGGAAGAFPPMVGYAAATGHFSLSSFILFAIIFIWTPPHFWALALGRSEDYRQAGIPMMPNVKGAARTRLEILLYTLLLAPLGVAPWLLGFASFVYGMLSIALGAAMLFFAARVYIVQEGPSADRHAKALFGFSILYLFLLFAEIVVERLVPIVVAMGAWLTSGMFPGFFH.

10 consecutive transmembrane segments (helical) span residues 28 to 48, 49 to 69, 94 to 114, 116 to 136, 149 to 169, 176 to 196, 222 to 242, 247 to 267, 277 to 297, and 300 to 320; these read VMSLVIFTALAGMLIAPDPVH, PIVGFASLLAIAVGAGASGAL, VMPNEALAFGLTLSFLSVFTL, IVANWLAAGFLAFTIFFYVVI, IVIGGAAGAFPPMVGYAAATG, FILFAIIFIWTPPHFWALALG, ILLYTLLLAPLGVAPWLLGFA, GMLSIALGAAMLFFAARVYIV, AKALFGFSILYLFLLFAEIVV, and LVPIVVAMGAWLTSGMFPGFF.

The protein belongs to the UbiA prenyltransferase family. Protoheme IX farnesyltransferase subfamily.

It localises to the cell inner membrane. It carries out the reaction heme b + (2E,6E)-farnesyl diphosphate + H2O = Fe(II)-heme o + diphosphate. It functions in the pathway porphyrin-containing compound metabolism; heme O biosynthesis; heme O from protoheme: step 1/1. Its function is as follows. Converts heme B (protoheme IX) to heme O by substitution of the vinyl group on carbon 2 of heme B porphyrin ring with a hydroxyethyl farnesyl side group. This is Protoheme IX farnesyltransferase from Beijerinckia indica subsp. indica (strain ATCC 9039 / DSM 1715 / NCIMB 8712).